The primary structure comprises 805 residues: Cell division cycle protein 48 homolog (805 aa).

ATP is bound by residues Gly-249–Thr-256 and Gly-522–Thr-529. Residues Gly-783 to Ser-805 form a disordered region.

This sequence belongs to the AAA ATPase family.

In terms of biological role, probably functions in cell division and growth processes. This Capsicum annuum (Capsicum pepper) protein is Cell division cycle protein 48 homolog (CAFP).